A 104-amino-acid polypeptide reads, in one-letter code: L-rhamnose mutarotase (104 aa).

Tyr-18 is a substrate binding site. His-22 (proton donor) is an active-site residue. Substrate-binding positions include Tyr-41 and 76 to 77 (WW).

Belongs to the rhamnose mutarotase family. In terms of assembly, homodimer.

It is found in the cytoplasm. The enzyme catalyses alpha-L-rhamnose = beta-L-rhamnose. The protein operates within carbohydrate metabolism; L-rhamnose metabolism. Involved in the anomeric conversion of L-rhamnose. This Salmonella dublin (strain CT_02021853) protein is L-rhamnose mutarotase.